The following is a 237-amino-acid chain: Early nodulin-like protein 1 (237 aa).

The N-terminal stretch at 1–28 (MEASRRWPYAAWFMAVLGLVAVFSSSEA) is a signal peptide. The 106-residue stretch at 29-134 (YVFYAGGRDG…GQKLYIIVMA (106 aa)) folds into the Phytocyanin domain. Asn59 carries N-linked (GlcNAc...) asparagine glycosylation. Cys85 and Cys122 form a disulfide bridge. Positions 139–215 (KPSEAPEPAG…SLGAPPPTSG (77 aa)) are disordered. Composition is skewed to low complexity over residues 140–152 (PSEA…AAGP) and 201–215 (MSRS…PTSG). Ser206 carries GPI-anchor amidated serine lipidation. Positions 207–237 (LGAPPPTSGAAGLAGVVASVVVGVLGALLMF) are cleaved as a propeptide — removed in mature form.

It belongs to the early nodulin-like (ENODL) family. In terms of tissue distribution, expressed ubiquitously. Accumulates particularly in reproductive tissues, especially in maturing seeds.

The protein localises to the vacuole. It localises to the aleurone grain membrane. Its function is as follows. May act as a carbohydrate transporter. This is Early nodulin-like protein 1 from Oryza sativa subsp. japonica (Rice).